A 232-amino-acid chain; its full sequence is Large ribosomal subunit protein uL1 (232 aa).

Belongs to the universal ribosomal protein uL1 family. Part of the 50S ribosomal subunit.

Functionally, binds directly to 23S rRNA. The L1 stalk is quite mobile in the ribosome, and is involved in E site tRNA release. In terms of biological role, protein L1 is also a translational repressor protein, it controls the translation of the L11 operon by binding to its mRNA. The polypeptide is Large ribosomal subunit protein uL1 (Francisella tularensis subsp. holarctica (strain LVS)).